Consider the following 137-residue polypeptide: MLQPKRTKFRKMFKGRIHGLAKGGSDLNFGTYGLKALEPERVTARQIEAARRAMTRHMKRQGRVWIRIFPDTPVTSKPTEVRMGKGKGSVDYWACKVKPGRVMFEIDGVNDEIAREALRLAAMKLPIKTRVVVREDW.

Belongs to the universal ribosomal protein uL16 family. In terms of assembly, part of the 50S ribosomal subunit.

Its function is as follows. Binds 23S rRNA and is also seen to make contacts with the A and possibly P site tRNAs. The protein is Large ribosomal subunit protein uL16 of Ruegeria pomeroyi (strain ATCC 700808 / DSM 15171 / DSS-3) (Silicibacter pomeroyi).